Here is a 315-residue protein sequence, read N- to C-terminus: Kiwa protein KwaB (315 aa).

Functionally, component of antiviral defense system Kiwa, composed of KwaA and KwaB. Expression of Kiwa in E.coli (strain MG1655) confers resistance to phages lambda and SECphi18. This is Kiwa protein KwaB from Escherichia coli O55:H7 (strain RM12579 / EPEC).